Here is a 115-residue protein sequence, read N- to C-terminus: Large ribosomal subunit protein P2 (115 aa).

At M1 the chain carries N-acetylmethionine. S17 and S19 each carry phosphoserine. K21 bears the N6-acetyllysine; alternate mark. K21 carries the N6-succinyllysine; alternate modification. Low complexity predominate over residues 76 to 90; sequence APGSAAPAAGSAPAA. The interval 76 to 115 is disordered; it reads APGSAAPAAGSAPAAAEEKKDEKKEESEESDDDMGFGLFD. Phosphoserine is present on residues S79 and S86. A compositionally biased stretch (basic and acidic residues) spans 91–101; the sequence is AEEKKDEKKEE. Phosphoserine is present on residues S102 and S105.

It belongs to the eukaryotic ribosomal protein P1/P2 family. Heterodimer with RPLP1 at the lateral ribosomal stalk of the large ribosomal subunit.

Its function is as follows. Plays an important role in the elongation step of protein synthesis. The chain is Large ribosomal subunit protein P2 (Rplp2) from Mus musculus (Mouse).